Consider the following 396-residue polypeptide: Maltose/maltodextrin-binding periplasmic protein (396 aa).

An N-terminal signal peptide occupies residues 1-26 (MKIKTGARILALSALTTMMFSASALA).

Belongs to the bacterial solute-binding protein 1 family. In terms of assembly, the complex is composed of two ATP-binding proteins (MalK), two transmembrane proteins (MalG and MalF) and a solute-binding protein (MalE).

It localises to the periplasm. In terms of biological role, part of the ABC transporter complex MalEFGK involved in maltose/maltodextrin import. Binds maltose and higher maltodextrins. In Klebsiella aerogenes (Enterobacter aerogenes), this protein is Maltose/maltodextrin-binding periplasmic protein (malE).